The following is a 567-amino-acid chain: Restriction of telomere capping protein 5 (567 aa).

In terms of domain architecture, TLDc spans Lys-289–Gly-515.

The protein belongs to the RTC5 family.

It localises to the cytoplasm. Its function is as follows. May be involved in a process influencing telomere capping. This Saccharomyces cerevisiae (strain YJM789) (Baker's yeast) protein is Restriction of telomere capping protein 5 (RTC5).